A 237-amino-acid polypeptide reads, in one-letter code: Probable S-methyl-5'-thioinosine phosphorylase (237 aa).

Residues threonine 12 and 54–55 (RH) each bind phosphate. A substrate-binding site is contributed by methionine 187. Threonine 188 provides a ligand contact to phosphate. Residue 211–213 (NWA) coordinates substrate.

This sequence belongs to the PNP/MTAP phosphorylase family. MTAP subfamily. In terms of assembly, homotrimer.

The enzyme catalyses S-methyl-5'-thioinosine + phosphate = 5-(methylsulfanyl)-alpha-D-ribose 1-phosphate + hypoxanthine. It participates in purine metabolism; purine nucleoside salvage. Its function is as follows. Catalyzes the reversible phosphorylation of S-methyl-5'-thioinosine (MTI) to hypoxanthine and 5-methylthioribose-1-phosphate. Involved in the breakdown of S-methyl-5'-thioadenosine (MTA), a major by-product of polyamine biosynthesis. Catabolism of (MTA) occurs via deamination to MTI and phosphorolysis to hypoxanthine. This Xylella fastidiosa (strain 9a5c) protein is Probable S-methyl-5'-thioinosine phosphorylase.